Reading from the N-terminus, the 432-residue chain is Lecithin-cholesterol acyltransferase-like 1 (432 aa).

Residues 7-29 traverse the membrane as a helical segment; sequence HYSVVIAILVVVTMTSMCQAVGS. The active-site Acyl-ester intermediate is serine 209. Active-site charge relay system residues include aspartate 374 and histidine 400.

Belongs to the AB hydrolase superfamily. Lipase family.

Its subcellular location is the membrane. The sequence is that of Lecithin-cholesterol acyltransferase-like 1 (LCAT1) from Arabidopsis thaliana (Mouse-ear cress).